Here is a 159-residue protein sequence, read N- to C-terminus: Transcriptional repressor NrdR (159 aa).

Residues 3–34 fold into a zinc finger; it reads CPFCRHDDTQVVDSRVSEDGAAIRRRRRCSAC. Positions 49–139 constitute an ATP-cone domain; sequence PAVVKKDGSR…VYRRFEDVSE (91 aa).

The protein belongs to the NrdR family. It depends on Zn(2+) as a cofactor.

Its function is as follows. Negatively regulates transcription of bacterial ribonucleotide reductase nrd genes and operons by binding to NrdR-boxes. The chain is Transcriptional repressor NrdR from Burkholderia cenocepacia (strain HI2424).